An 814-amino-acid chain; its full sequence is MHPFCCVTTVSDHSPSMPPLPEPQPPLPNYAADFGSARSEPIITRSASQSYNHSGQFNNNLIHSLSFNHHQSDVTDRLGQRVLALPAAVREPPVDVKINDIVGNGIAGILYKWVNYGRGWRPRWFVLQDGVLSYYKIHGPDKIFVSPETEKGSKVIGDESARMISRHNRRGGSSSSCQLRRKPFGEVHLKVSSVRESRSDDKRFSIFTGTKRLHLRAETREDRTTWVEALQAVKDMFPRMSNSELMAPTNNLAMSTEKIRLRLIEEGVSELAIQDCEQIMKSEFSALQSQLVLLKQKQWLLIDTLRQLETEKVDLENTVVDESQRQADNGCSGELRHEKFSEGTATESDDDNERGDAAEEEFDEEENTFFDTRDFLSSSSFKSSGSGFRTSSFSSDEDGFESEDDIDPSIKSIGCNYPRVKRRKNLPDPVEKEKSVSLWSMIKDNIGKDLTKVCLPVYFNEPLSSLQKCFEDLEYSYLLDRAFEYGKRGNSLMRILNVAAFAVSGYASTEGRICKPFNPLLGETYEADYPDKGLRFFSEKVSHHPMVVACHCDGTGWKFWGDSNLRSKFWGRSIQLDPVGVLTLQFDDGEILQWSKVTTSIYNLILGKLYCDHYGTMRIEGSAEYSCKLKFKEQSIIDRNPHQVHGIVQNKSGKTVATMFGKWDESIHFVTGDCSGKGKLSEDMSGAQLLWKRSKPPGNATKYNLTRFAITLNELTPGLKERLPPTDSRLRPDQRYLENGEFEMANTEKLRLEQRQRQARKMQERGWKPRWFMKEKGSESYRYKGGYWEAREDGSWVDCPDIFGHIDSDQQMIE.

The PH domain maps to 103–235; the sequence is GNGIAGILYK…WVEALQAVKD (133 aa). Residues 300 to 367 are a coiled coil; that stretch reads LLIDTLRQLE…AEEEFDEEEN (68 aa). 2 disordered regions span residues 319–366 and 379–411; these read VVDE…DEEE and SSFKSSGSGFRTSSFSSDEDGFESEDDIDPSIK. A compositionally biased stretch (acidic residues) spans 347-366; that stretch reads ESDDDNERGDAAEEEFDEEE. The span at 379 to 394 shows a compositional bias: low complexity; the sequence is SSFKSSGSGFRTSSFS. Positions 395 to 407 are enriched in acidic residues; it reads SDEDGFESEDDID.

It belongs to the OSBP family. As to expression, expressed in roots, leaves, stems, flowers and pollen.

In terms of biological role, may be involved in the transport of sterols. The polypeptide is Oxysterol-binding protein-related protein 1C (ORP1C) (Arabidopsis thaliana (Mouse-ear cress)).